A 342-amino-acid polypeptide reads, in one-letter code: Cystein proteinase inhibitor protein salarin (342 aa).

Residues 1-19 (MKSLVLLLLVAVTVSSVVS) form the signal peptide. Asparagine 153 is a glycosylation site (N-linked (GlcNAc) asparagine). Threonine 184 is a glycosylation site (O-linked (GlcNAc) threonine).

N-glycosylated, with sialylated biantennary complex-type glycans. Post-translationally, O-glycosylated, with sialylated oligosaccharides.

Its subcellular location is the cytoplasm. The protein localises to the vacuole. Inhibits papain and ficin (cysteine proteinases) but not trypsin (a serine proteinase). This chain is Cystein proteinase inhibitor protein salarin (salarin), found in Salvelinus alpinus (Arctic char).